We begin with the raw amino-acid sequence, 307 residues long: Ornithine carbamoyltransferase (307 aa).

Carbamoyl phosphate-binding positions include 53–56, Q80, R104, and 131–134; these read STRT and HPCQ. Residues N162, D219, and 223 to 224 contribute to the L-ornithine site; that span reads SM. Carbamoyl phosphate-binding positions include 259 to 260 and R287; that span reads CL.

Belongs to the aspartate/ornithine carbamoyltransferase superfamily. OTCase family.

The protein resides in the cytoplasm. The catalysed reaction is carbamoyl phosphate + L-ornithine = L-citrulline + phosphate + H(+). It functions in the pathway amino-acid biosynthesis; L-arginine biosynthesis; L-arginine from L-ornithine and carbamoyl phosphate: step 1/3. Functionally, reversibly catalyzes the transfer of the carbamoyl group from carbamoyl phosphate (CP) to the N(epsilon) atom of ornithine (ORN) to produce L-citrulline. The protein is Ornithine carbamoyltransferase of Psychrobacter arcticus (strain DSM 17307 / VKM B-2377 / 273-4).